A 92-amino-acid polypeptide reads, in one-letter code: MALPQISTADQAKLQLMQEMEIEMMSDLYNRMTNACHKKCIPPRYSESELGKGEMVCIDRCVAKYLDIHEKIGKKLTAMSMQDEELMKKMSS.

The Twin CX3C motif motif lies at 36-61 (CHKKCIPPRYSESELGKGEMVCIDRC). Cystine bridges form between C36–C61 and C40–C57.

Belongs to the small Tim family. As to quaternary structure, heterohexamer; composed of 3 copies of Tim9 and 3 copies of Tim10, named soluble 70 kDa complex. The complex associates with the Tim22 component of the TIM22 complex. Interacts with multi-pass transmembrane proteins in transit.

It is found in the mitochondrion inner membrane. Its function is as follows. Mitochondrial intermembrane chaperone that participates in the import and insertion of multi-pass transmembrane proteins into the mitochondrial inner membrane. May also be required for the transfer of beta-barrel precursors from the TOM complex to the sorting and assembly machinery (SAM complex) of the outer membrane. Acts as a chaperone-like protein that protects the hydrophobic precursors from aggregation and guide them through the mitochondrial intermembrane space. The chain is Mitochondrial import inner membrane translocase subunit Tim10 (Tim10) from Drosophila melanogaster (Fruit fly).